We begin with the raw amino-acid sequence, 469 residues long: Ribulose bisphosphate carboxylase large chain (469 aa).

Positions 1–2 (MS) are excised as a propeptide. An N-acetylproline modification is found at Pro-3. Lys-14 is subject to N6,N6,N6-trimethyllysine. Residues Asn-123 and Thr-173 each coordinate substrate. Lys-175 (proton acceptor) is an active-site residue. Lys-177 is a substrate binding site. 3 residues coordinate Mg(2+): Lys-201, Asp-203, and Glu-204. Lys-201 is modified (N6-carboxylysine). Catalysis depends on His-294, which acts as the Proton acceptor. Arg-295, His-327, and Ser-379 together coordinate substrate.

This sequence belongs to the RuBisCO large chain family. Type I subfamily. Heterohexadecamer of 8 large chains and 8 small chains; disulfide-linked. The disulfide link is formed within the large subunit homodimers. Mg(2+) is required as a cofactor. Post-translationally, the disulfide bond which can form in the large chain dimeric partners within the hexadecamer appears to be associated with oxidative stress and protein turnover.

It localises to the plastid. The protein localises to the chloroplast. It carries out the reaction 2 (2R)-3-phosphoglycerate + 2 H(+) = D-ribulose 1,5-bisphosphate + CO2 + H2O. The enzyme catalyses D-ribulose 1,5-bisphosphate + O2 = 2-phosphoglycolate + (2R)-3-phosphoglycerate + 2 H(+). RuBisCO catalyzes two reactions: the carboxylation of D-ribulose 1,5-bisphosphate, the primary event in carbon dioxide fixation, as well as the oxidative fragmentation of the pentose substrate in the photorespiration process. Both reactions occur simultaneously and in competition at the same active site. The protein is Ribulose bisphosphate carboxylase large chain of Atriplex patula (Common orache).